Consider the following 130-residue polypeptide: Small ribosomal subunit protein uS11 (130 aa).

The segment at 111–130 (IRDVTPVPHNGSRPPKRRRA) is disordered.

The protein belongs to the universal ribosomal protein uS11 family. In terms of assembly, part of the 30S ribosomal subunit. Interacts with proteins S7 and S18. Binds to IF-3.

Located on the platform of the 30S subunit, it bridges several disparate RNA helices of the 16S rRNA. Forms part of the Shine-Dalgarno cleft in the 70S ribosome. This is Small ribosomal subunit protein uS11 from Lactobacillus acidophilus (strain ATCC 700396 / NCK56 / N2 / NCFM).